Consider the following 425-residue polypeptide: MTAIIDIVGREILDSRGNPTVEVDVVLEDGSFGRAAVPSGASTGAHEAVELRDGGSRYLGKGVEKAVEVVNGKIFDAIAGMDAESQLLIDQTLIDLDGSANKGNLGANAILGVSLAVAKAAAQASGLPLYRYVGGTNAHVLPVPMMNIINGGAHADNPIDFQEFMILPVGATSIREAVRYGSEVFHTLKKRLKDAGHNTNVGDEGGFAPNLKNAQAALDFIMESIEKAGFKPGEDIALGLDCAATEFFKDGNYVYEGERKTRDPKAQAKYLAKLASDYPIVTIEDGMAEDDWEGWKYLTDLIGNKCQLVGDDLFVTNSARLRDGIRLGVANSILVKVNQIGSLSETLDAVETAHKAGYTAVMSHRSGETEDSTIADLAVATNCGQIKTGSLARSDRTAKYNQLIRIEEELGKQARYAGRSALKLL.

Gln-162 is a (2R)-2-phosphoglycerate binding site. Glu-204 (proton donor) is an active-site residue. Positions 241, 284, and 311 each coordinate Mg(2+). (2R)-2-phosphoglycerate is bound by residues Lys-336, Arg-365, Ser-366, and Lys-387. Lys-336 acts as the Proton acceptor in catalysis.

This sequence belongs to the enolase family. The cofactor is Mg(2+).

It is found in the cytoplasm. Its subcellular location is the secreted. The protein localises to the cell surface. The catalysed reaction is (2R)-2-phosphoglycerate = phosphoenolpyruvate + H2O. The protein operates within carbohydrate degradation; glycolysis; pyruvate from D-glyceraldehyde 3-phosphate: step 4/5. Catalyzes the reversible conversion of 2-phosphoglycerate (2-PG) into phosphoenolpyruvate (PEP). It is essential for the degradation of carbohydrates via glycolysis. This is Enolase from Brucella abortus (strain S19).